The sequence spans 65 residues: Temporin-LK1 (65 aa).

An N-terminal signal peptide occupies residues 1-22 (MFTMKKSLLLLFFLGAINLPLC). A propeptide spanning residues 23-44 (QEERNAEEERRDGDDEGSVEVQ) is cleaved from the precursor. Phenylalanine 63 is subject to Phenylalanine amide.

In terms of tissue distribution, expressed by the skin glands.

It localises to the secreted. Has antimicrobial activity against Gram-positive bacteria S.aureus ATCC 2592 (MIC=2.5 uM), S.aureus ATCC 43300 (MIC=2.5 uM) and B.subtilis (MIC=15.0 uM), against Gram-negative bacteria E.coli ML-35P (MIC=30.0 uM), P.aeruginosa PA01 (MIC=2.5 uM) and P.aeruginosa ATCC 27853 (MIC=2.5 uM) and against fungus C.albicans ATCC 2002 (MIC=5.0 uM). This Limnonectes kuhlii (Kuhl's Creek frog) protein is Temporin-LK1.